A 154-amino-acid chain; its full sequence is Superoxide dismutase [Cu-Zn] (154 aa).

Cu cation is bound by residues His45, His47, and His62. The cysteines at positions 56 and 146 are disulfide-linked. Zn(2+)-binding residues include His62, His70, His79, and Asp82. His120 contacts Cu cation.

It belongs to the Cu-Zn superoxide dismutase family. As to quaternary structure, homodimer. Requires Cu cation as cofactor. The cofactor is Zn(2+).

The protein localises to the cytoplasm. It catalyses the reaction 2 superoxide + 2 H(+) = H2O2 + O2. In terms of biological role, destroys radicals which are normally produced within the cells and which are toxic to biological systems. This chain is Superoxide dismutase [Cu-Zn], found in Bombyx mori (Silk moth).